Here is a 472-residue protein sequence, read N- to C-terminus: Protein translocase subunit SecD (472 aa).

Helical transmembrane passes span 8-28 (ILFT…PLSG), 300-320 (TIIN…IIFY), 325-347 (VIAD…WTGA), 353-375 (GIAG…YERI), 396-416 (VFST…VLFF), and 424-444 (GFAV…LVVS).

It belongs to the SecD/SecF family. SecD subfamily. As to quaternary structure, forms a complex with SecF. Part of the essential Sec protein translocation apparatus which comprises SecA, SecYEG and auxiliary proteins SecDF. Other proteins may also be involved.

It is found in the cell inner membrane. Its function is as follows. Part of the Sec protein translocase complex. Interacts with the SecYEG preprotein conducting channel. SecDF uses the proton motive force (PMF) to complete protein translocation after the ATP-dependent function of SecA. The sequence is that of Protein translocase subunit SecD from Petrotoga mobilis (strain DSM 10674 / SJ95).